The primary structure comprises 148 residues: Large ribosomal subunit protein uL15 (148 aa).

The segment at 1-47 (MAFSLENLRPAPGSRPKSKRVGRGSSSGKGKTSSRGHKGQGRGTGKV) is disordered.

This sequence belongs to the universal ribosomal protein uL15 family. In terms of assembly, part of the 50S ribosomal subunit.

Its function is as follows. Binds to the 23S rRNA. This chain is Large ribosomal subunit protein uL15, found in Kosmotoga olearia (strain ATCC BAA-1733 / DSM 21960 / TBF 19.5.1).